The following is a 427-amino-acid chain: cAMP-dependent protein kinase regulatory subunit (427 aa).

The segment at 38–184 (QFCSNFFIRK…RIKVSISNNF (147 aa)) is dimerization and phosphorylation. Residues 96-145 (TTHMGHPNDHGALHDDDDDPLEDEDDEEFDKFSTEPLPSLPPTNYNRGRR) form a disordered region. Acidic residues predominate over residues 110–124 (DDDDDPLEDEDDEEF). Position 147 is a phosphoserine (serine 147). 3',5'-cyclic AMP-binding positions include 185–300 (LFRN…FLSE), glutamate 250, arginine 259, 303–422 (LLKS…YHAV), glutamate 372, and arginine 381.

Belongs to the cAMP-dependent kinase regulatory chain family. In terms of assembly, tetramer, composed of 2 regulatory (R) and 2 catalytic (C) subunits. In the presence of cAMP it dissociates into 2 active monomeric C subunits and an R dimer.

This Mucor circinelloides f. lusitanicus (Mucor racemosus var. lusitanicus) protein is cAMP-dependent protein kinase regulatory subunit (pkar).